Reading from the N-terminus, the 182-residue chain is Large ribosomal subunit protein uL10 (182 aa).

The protein belongs to the universal ribosomal protein uL10 family. In terms of assembly, part of the ribosomal stalk of the 50S ribosomal subunit. The N-terminus interacts with L11 and the large rRNA to form the base of the stalk. The C-terminus forms an elongated spine to which L12 dimers bind in a sequential fashion forming a multimeric L10(L12)X complex.

Forms part of the ribosomal stalk, playing a central role in the interaction of the ribosome with GTP-bound translation factors. This is Large ribosomal subunit protein uL10 from Herminiimonas arsenicoxydans.